A 589-amino-acid chain; its full sequence is Proton pump-interactor 2 (589 aa).

A coiled-coil region spans residues 205–245 (EDSLAEKEASINRVKSMAVELNEVKKELDAITWKINHLSDK). Basic and acidic residues-rich tracts occupy residues 370–383 (KGGE…REDS), 395–408 (TDKR…KAMD), 426–450 (VYEK…REEQ), and 504–534 (ESDH…KERS). Disordered regions lie at residues 370 to 450 (KGGE…REEQ) and 485 to 534 (KECE…KERS). Residues 431 to 500 (KKEEEEVDEE…AKKKAAANSS (70 aa)) are a coiled coil. Residues 568-588 (WVWGLSSAALAVALFLVVLLL) traverse the membrane as a helical segment.

Belongs to the plant Proton pump-interactor protein family. As to expression, expressed in seedlings and flowers.

It localises to the cell membrane. Its subcellular location is the endoplasmic reticulum membrane. Its function is as follows. May regulate plasma membrane ATPase activity. This chain is Proton pump-interactor 2 (PPI2), found in Arabidopsis thaliana (Mouse-ear cress).